A 402-amino-acid polypeptide reads, in one-letter code: Beta-1,4-galactosyltransferase 1 (402 aa).

Residues 1–24 lie on the Cytoplasmic side of the membrane; it reads MKFREPLLGGSAAMPGASLQRACR. Residues 25-44 traverse the membrane as a helical; Signal-anchor for type II membrane protein segment; the sequence is LLVAVCALHLGVTLVYYLAG. Residues 45 to 402 are Lumenal-facing; the sequence is RDLRRLPQLV…KITVDIGTPS (358 aa). The disordered stretch occupies residues 77–130; it reads LRLRGVAPPPPLQNSSKPRSRAPSNLDAYSHPGPGPGPGSNLTSAPVPSTTTRS. N-linked (GlcNAc...) asparagine glycosylation is found at N90 and N117. The segment covering 116 to 130 has biased composition (polar residues); that stretch reads SNLTSAPVPSTTTRS. A disulfide bond links C134 and C176. Residues 187–191, 226–228, 253–254, and W314 each bind UDP-alpha-D-galactose; these read PFRNR, FNR, and VD. A disulfide bridge links C247 with C266. D254 lines the Mn(2+) pocket. 316 to 319 contacts N-acetyl-D-glucosamine; that stretch reads GEDD. A Mn(2+)-binding site is contributed by H347. UDP-alpha-D-galactose is bound at residue 347-349; sequence HSR. R359 contacts N-acetyl-D-glucosamine.

Belongs to the glycosyltransferase 7 family. Homodimer; and heterodimer with alpha-lactalbumin to form lactose synthase. Interacts (via N-terminal cytoplasmic domain) with UBE2Q1 (via N-terminus); the interaction is direct. The cofactor is Mn(2+). In terms of processing, the soluble form derives from the membrane forms by proteolytic processing. Detected in milk (at protein level).

The protein resides in the golgi apparatus. It localises to the golgi stack membrane. Its subcellular location is the cell membrane. The protein localises to the cell surface. It is found in the cell projection. The protein resides in the filopodium. It localises to the secreted. It catalyses the reaction D-glucose + UDP-alpha-D-galactose = lactose + UDP + H(+). It carries out the reaction an N-acetyl-beta-D-glucosaminyl derivative + UDP-alpha-D-galactose = a beta-D-galactosyl-(1-&gt;4)-N-acetyl-beta-D-glucosaminyl derivative + UDP + H(+). The enzyme catalyses N-acetyl-D-glucosamine + UDP-alpha-D-galactose = beta-D-galactosyl-(1-&gt;4)-N-acetyl-D-glucosamine + UDP + H(+). The catalysed reaction is a beta-D-GlcNAc-(1-&gt;3)-beta-D-Gal-(1-&gt;4)-beta-D-Glc-(1&lt;-&gt;1)-Cer(d18:1(4E)) + UDP-alpha-D-galactose = a neolactoside nLc4Cer(d18:1(4E)) + UDP + H(+). It catalyses the reaction a beta-D-glucosylceramide + UDP-alpha-D-galactose = a beta-D-galactosyl-(1-&gt;4)-beta-D-glucosyl-(1&lt;-&gt;1)-ceramide + UDP + H(+). It carries out the reaction a neolactoside IV(3)-beta-GlcNAc-nLc4Cer + UDP-alpha-D-galactose = a neolactoside nLc6Cer + UDP + H(+). It functions in the pathway protein modification; protein glycosylation. The Golgi complex form catalyzes the production of lactose in the lactating mammary gland and could also be responsible for the synthesis of complex-type N-linked oligosaccharides in many glycoproteins as well as the carbohydrate moieties of glycolipids. Functionally, the cell surface form functions as a recognition molecule during a variety of cell to cell and cell to matrix interactions, as those occurring during development and egg fertilization, by binding to specific oligosaccharide ligands on opposing cells or in the extracellular matrix. The secreted form is responsible for the synthesis of complex-type to N-linked oligosaccharides in many glycoproteins as well as the carbohydrate moieties of glycolipids. This Bos taurus (Bovine) protein is Beta-1,4-galactosyltransferase 1 (B4GALT1).